Consider the following 233-residue polypeptide: Purine nucleoside phosphorylase DeoD-type (233 aa).

Histidine 4 provides a ligand contact to a purine D-ribonucleoside. Residues glycine 20, arginine 24, arginine 43, and 87–90 (RVGT) contribute to the phosphate site. Residues 178–180 (EME) and 202–203 (SD) each bind a purine D-ribonucleoside. Aspartate 203 acts as the Proton donor in catalysis.

It belongs to the PNP/UDP phosphorylase family. Homohexamer; trimer of homodimers.

The enzyme catalyses a purine D-ribonucleoside + phosphate = a purine nucleobase + alpha-D-ribose 1-phosphate. It catalyses the reaction a purine 2'-deoxy-D-ribonucleoside + phosphate = a purine nucleobase + 2-deoxy-alpha-D-ribose 1-phosphate. Functionally, catalyzes the reversible phosphorolytic breakdown of the N-glycosidic bond in the beta-(deoxy)ribonucleoside molecules, with the formation of the corresponding free purine bases and pentose-1-phosphate. This chain is Purine nucleoside phosphorylase DeoD-type, found in Listeria innocua serovar 6a (strain ATCC BAA-680 / CLIP 11262).